The following is a 438-amino-acid chain: Methylenetetrahydrofolate--tRNA-(uracil-5-)-methyltransferase TrmFO (438 aa).

9-14 (GGGLAG) serves as a coordination point for FAD.

It belongs to the MnmG family. TrmFO subfamily. It depends on FAD as a cofactor.

The protein localises to the cytoplasm. It catalyses the reaction uridine(54) in tRNA + (6R)-5,10-methylene-5,6,7,8-tetrahydrofolate + NADH + H(+) = 5-methyluridine(54) in tRNA + (6S)-5,6,7,8-tetrahydrofolate + NAD(+). The enzyme catalyses uridine(54) in tRNA + (6R)-5,10-methylene-5,6,7,8-tetrahydrofolate + NADPH + H(+) = 5-methyluridine(54) in tRNA + (6S)-5,6,7,8-tetrahydrofolate + NADP(+). In terms of biological role, catalyzes the folate-dependent formation of 5-methyl-uridine at position 54 (M-5-U54) in all tRNAs. The protein is Methylenetetrahydrofolate--tRNA-(uracil-5-)-methyltransferase TrmFO of Lactobacillus johnsonii (strain CNCM I-12250 / La1 / NCC 533).